We begin with the raw amino-acid sequence, 159 residues long: Protransforming growth factor alpha (159 aa).

The first 23 residues, 1–23, serve as a signal peptide directing secretion; sequence MVPAAGQLALLALGILVAVCQAL. Residues 24–38 constitute a propeptide, removed in mature form; it reads ENSTSPLSDSPVAAA. The Extracellular portion of the chain corresponds to 24-97; sequence ENSTSPLSDS…AVVAASQKKQ (74 aa). The N-linked (GlcNAc...) asparagine glycan is linked to N25. The EGF-like domain maps to 42–82; that stretch reads HFNKCPDSHTQYCFHGTCRFLVQEEKPACVCHSGYVGVRCE. 3 disulfides stabilise this stretch: C46/C59, C54/C70, and C72/C81. A propeptide spans 89–159 (removed in mature form); the sequence is VVAASQKKQA…TACCHSETVV (71 aa). A helical membrane pass occupies residues 98-123; the sequence is AITALVVVSIVALAVLIITCVLIHCC. Topologically, residues 124 to 159 are cytoplasmic; the sequence is QVRKHCEWCRALVCRHEKPSALLKGRTACCHSETVV. Residues C152 and C153 are each lipidated (S-palmitoyl cysteine).

Interacts with the PDZ domains of MAGI3, SDCBP and SNTA1. The interaction with SDCBP, is required for the targeting to the cell surface. In the endoplasmic reticulum, in its immature form (i.e. with a prosegment and lacking full N-glycosylation), interacts with CNIH. In the Golgi apparatus, may form a complex with CNIH and GORASP2. Interacts (via cytoplasmic C-terminal domain) with NKD2.

The protein resides in the secreted. It localises to the extracellular space. The protein localises to the cell membrane. Functionally, TGF alpha is a mitogenic polypeptide that is able to bind to the EGF receptor/EGFR and to act synergistically with TGF beta to promote anchorage-independent cell proliferation in soft agar. The protein is Protransforming growth factor alpha (Tgfa) of Rattus norvegicus (Rat).